We begin with the raw amino-acid sequence, 692 residues long: Methionine--tRNA ligase (692 aa).

Residues 26–36 (PYANGSIHLGH) carry the 'HIGH' region motif. The Zn(2+) site is built by Cys157, Cys160, Cys170, and Cys173. The short motif at 342-346 (KMSKS) is the 'KMSKS' region element. Position 345 (Lys345) interacts with ATP. Residues 590 to 692 (DFAKVDLRIA…SGAQPGMRVK (103 aa)) form the tRNA-binding domain.

This sequence belongs to the class-I aminoacyl-tRNA synthetase family. MetG type 1 subfamily. As to quaternary structure, homodimer. Zn(2+) serves as cofactor.

Its subcellular location is the cytoplasm. It catalyses the reaction tRNA(Met) + L-methionine + ATP = L-methionyl-tRNA(Met) + AMP + diphosphate. In terms of biological role, is required not only for elongation of protein synthesis but also for the initiation of all mRNA translation through initiator tRNA(fMet) aminoacylation. In Methylobacillus flagellatus (strain ATCC 51484 / DSM 6875 / VKM B-1610 / KT), this protein is Methionine--tRNA ligase.